The sequence spans 304 residues: UDP-3-O-acyl-N-acetylglucosamine deacetylase (304 aa).

Zn(2+)-binding residues include H79, H238, and D242. Residue H265 is the Proton donor of the active site.

The protein belongs to the LpxC family. The cofactor is Zn(2+).

It carries out the reaction a UDP-3-O-[(3R)-3-hydroxyacyl]-N-acetyl-alpha-D-glucosamine + H2O = a UDP-3-O-[(3R)-3-hydroxyacyl]-alpha-D-glucosamine + acetate. It participates in glycolipid biosynthesis; lipid IV(A) biosynthesis; lipid IV(A) from (3R)-3-hydroxytetradecanoyl-[acyl-carrier-protein] and UDP-N-acetyl-alpha-D-glucosamine: step 2/6. Catalyzes the hydrolysis of UDP-3-O-myristoyl-N-acetylglucosamine to form UDP-3-O-myristoylglucosamine and acetate, the committed step in lipid A biosynthesis. The sequence is that of UDP-3-O-acyl-N-acetylglucosamine deacetylase from Photobacterium profundum (strain SS9).